A 204-amino-acid chain; its full sequence is Somatotropin (204 aa).

The N-terminal stretch at 1-17 (MDRVVLLLSVLSLGVSS) is a signal peptide. Gln18 bears the Pyrrolidone carboxylic acid mark. 2 cysteine pairs are disulfide-bonded: Cys69-Cys177 and Cys194-Cys202.

It belongs to the somatotropin/prolactin family.

It is found in the secreted. Growth hormone plays an important role in growth control and is involved in the regulation of several anabolic processes. Implicated as an osmoregulatory substance important for seawater adaptation. The protein is Somatotropin (gh) of Seriola quinqueradiata (Five-ray yellowtail).